Consider the following 618-residue polypeptide: Probable arginine--tRNA ligase, cytoplasmic (618 aa).

Interaction with tRNA stretches follow at residues 60–61 (ET) and 104–109 (NGIFLR). L-arginine-binding positions include 146–151 (EFSSPN), histidine 160, tyrosine 359, aspartate 363, and glutamine 387. Positions 149-160 (SPNIAKPFHAGH) match the 'HIGH' region motif. An interaction with tRNA region spans residues 496–510 (DTGPYLQYAHSRLSS).

It belongs to the class-I aminoacyl-tRNA synthetase family.

Its subcellular location is the cytoplasm. The enzyme catalyses tRNA(Arg) + L-arginine + ATP = L-arginyl-tRNA(Arg) + AMP + diphosphate. Forms part of a macromolecular complex that catalyzes the attachment of specific amino acids to cognate tRNAs during protein synthesis. The polypeptide is Probable arginine--tRNA ligase, cytoplasmic (mrs1) (Schizosaccharomyces pombe (strain 972 / ATCC 24843) (Fission yeast)).